We begin with the raw amino-acid sequence, 291 residues long: ATP synthase gamma chain (291 aa).

This sequence belongs to the ATPase gamma chain family. F-type ATPases have 2 components, CF(1) - the catalytic core - and CF(0) - the membrane proton channel. CF(1) has five subunits: alpha(3), beta(3), gamma(1), delta(1), epsilon(1). CF(0) has three main subunits: a, b and c.

Its subcellular location is the cell inner membrane. Functionally, produces ATP from ADP in the presence of a proton gradient across the membrane. The gamma chain is believed to be important in regulating ATPase activity and the flow of protons through the CF(0) complex. The sequence is that of ATP synthase gamma chain from Caulobacter vibrioides (strain NA1000 / CB15N) (Caulobacter crescentus).